The primary structure comprises 123 residues: Small ribosomal subunit protein uS12cz/uS12cy (123 aa).

The protein belongs to the universal ribosomal protein uS12 family. As to quaternary structure, part of the 30S ribosomal subunit.

The protein localises to the plastid. It localises to the chloroplast. Functionally, with S4 and S5 plays an important role in translational accuracy. Located at the interface of the 30S and 50S subunits. The sequence is that of Small ribosomal subunit protein uS12cz/uS12cy (rps12-A) from Coffea arabica (Arabian coffee).